A 672-amino-acid chain; its full sequence is DNA ligase (672 aa).

NAD(+) contacts are provided by residues 34-38, 83-84, and glutamate 117; these read DAEYD and SL. Residue lysine 119 is the N6-AMP-lysine intermediate of the active site. NAD(+) contacts are provided by arginine 140, glutamate 177, lysine 293, and lysine 317. Zn(2+) is bound by residues cysteine 411, cysteine 414, cysteine 429, and cysteine 434. The BRCT domain maps to 591–672; it reads RVGGRFTGKT…FLAMLGVCRT (82 aa).

The protein belongs to the NAD-dependent DNA ligase family. LigA subfamily. Mg(2+) is required as a cofactor. Requires Mn(2+) as cofactor.

The enzyme catalyses NAD(+) + (deoxyribonucleotide)n-3'-hydroxyl + 5'-phospho-(deoxyribonucleotide)m = (deoxyribonucleotide)n+m + AMP + beta-nicotinamide D-nucleotide.. Its function is as follows. DNA ligase that catalyzes the formation of phosphodiester linkages between 5'-phosphoryl and 3'-hydroxyl groups in double-stranded DNA using NAD as a coenzyme and as the energy source for the reaction. It is essential for DNA replication and repair of damaged DNA. The protein is DNA ligase of Geotalea uraniireducens (strain Rf4) (Geobacter uraniireducens).